Consider the following 447-residue polypeptide: ATP-dependent protease ATPase subunit HslU (447 aa).

Residues Ile18, 60-65, Asp259, Glu325, and Arg397 contribute to the ATP site; that span reads GVGKTE.

This sequence belongs to the ClpX chaperone family. HslU subfamily. A double ring-shaped homohexamer of HslV is capped on each side by a ring-shaped HslU homohexamer. The assembly of the HslU/HslV complex is dependent on binding of ATP.

The protein resides in the cytoplasm. Its function is as follows. ATPase subunit of a proteasome-like degradation complex; this subunit has chaperone activity. The binding of ATP and its subsequent hydrolysis by HslU are essential for unfolding of protein substrates subsequently hydrolyzed by HslV. HslU recognizes the N-terminal part of its protein substrates and unfolds these before they are guided to HslV for hydrolysis. This chain is ATP-dependent protease ATPase subunit HslU, found in Burkholderia ambifaria (strain MC40-6).